The primary structure comprises 358 residues: Tubulin-like protein TubZ (358 aa).

Residues Gln-12–Asn-16, Thr-95, Gly-99–Gly-101, Glu-132, Asn-164, Glu-170, and Asn-174 contribute to the GDP site. Residue Asn-182 participates in GTP binding.

The protein belongs to the FtsZ family. TubZ subfamily. As to quaternary structure, monomer. In the presence of Mg(2+) and GTP assembles into 2-stranded filaments which coalesce into bundles. Binds a centromere-like site (tubC)-TubR complex. The TubZ-TubR-tubC complex bind to TubY which reshapes the filament bundles into rings. A later paper by the same group shows 4-stranded filament formation and suggests the 2-stranded form is a short-lived intermediate.

It is found in the host cytoplasm. The catalysed reaction is GTP + H2O = GDP + phosphate + H(+). A tubulin-like, filament forming GTPase; the motor component of the type III partition system presumably used to ensure correct segregation of this bacteriophage. In the presence of Mg(2+) and GTP (or GTP-gamma-S) assembles into filaments which upon polymerization are almost exclusively bound to GDP. Filament formation is cooperative, requiring a critical concentration. Formation occurs very quickly and is followed by disassembly as GTP is consumed. Unlike its plasmid homolog in B.thuringiensis (AC Q8KNP3) GTP-gamma-S does not alter filament formation. When forced to assemble with GDP instead of GTP it makes much stiffer, thicker filaments. The filaments bind a DNA centromere-like site (tubC)-TubR complex which extends to surround the TubZ filaments. Highly dynamic filaments grow at the plus end and depolymerize at the minus end, a process called treadmilling. TubR-tubC complexes track the depolymerizing minus end of the filament, probably pulling phage DNA within the cell. The chain is Tubulin-like protein TubZ from Clostridium botulinum C phage (Clostridium botulinum C bacteriophage).